We begin with the raw amino-acid sequence, 366 residues long: MIKIAIDVMGGDFAPLEIVKGTLLALNKNKEIHVVLYGNQKLITPLIEKTPFFGNNQITIKHTPYFLRSADKNIRDQLKATPNASLFLALEAAKQDEVQGVVSAGATQTLVLASHLILKKMPLMQRIAIAPMFNSFDNRTRILLDAGANTELKPQHLHTFANYATIIAKEILEIPNPQIKLLNIGTEPTKGRALELETYQLLSQDSNLNFGGNEEPQNLLTTSADILLSDGFTANIALKTYEGTMLNFMNHFKTILTKNLIKKMATKTLFQKPLQQLKNQLDPRQIGGAMLLGLNKIVIKAHGSSQAYAFCQAILQAQKLIKAQVNQKIAHSLESAKNKETQSKQASTKNTAPKTSETTKESQQSL.

The disordered stretch occupies residues 334–366 (ESAKNKETQSKQASTKNTAPKTSETTKESQQSL). Over residues 343–366 (SKQASTKNTAPKTSETTKESQQSL) the composition is skewed to polar residues.

The protein belongs to the PlsX family. As to quaternary structure, homodimer. Probably interacts with PlsY.

Its subcellular location is the cytoplasm. It carries out the reaction a fatty acyl-[ACP] + phosphate = an acyl phosphate + holo-[ACP]. It participates in lipid metabolism; phospholipid metabolism. In terms of biological role, catalyzes the reversible formation of acyl-phosphate (acyl-PO(4)) from acyl-[acyl-carrier-protein] (acyl-ACP). This enzyme utilizes acyl-ACP as fatty acyl donor, but not acyl-CoA. This is Phosphate acyltransferase from Onion yellows phytoplasma (strain OY-M).